We begin with the raw amino-acid sequence, 72 residues long: Translation initiation factor IF-1 (72 aa).

In terms of domain architecture, S1-like spans Met-1–Lys-72.

It belongs to the IF-1 family. Component of the 30S ribosomal translation pre-initiation complex which assembles on the 30S ribosome in the order IF-2 and IF-3, IF-1 and N-formylmethionyl-tRNA(fMet); mRNA recruitment can occur at any time during PIC assembly.

Its subcellular location is the cytoplasm. Its function is as follows. One of the essential components for the initiation of protein synthesis. Stabilizes the binding of IF-2 and IF-3 on the 30S subunit to which N-formylmethionyl-tRNA(fMet) subsequently binds. Helps modulate mRNA selection, yielding the 30S pre-initiation complex (PIC). Upon addition of the 50S ribosomal subunit IF-1, IF-2 and IF-3 are released leaving the mature 70S translation initiation complex. This chain is Translation initiation factor IF-1, found in Desulfitobacterium hafniense (strain Y51).